We begin with the raw amino-acid sequence, 61 residues long: Large ribosomal subunit protein bL33 (61 aa).

It belongs to the bacterial ribosomal protein bL33 family.

This chain is Large ribosomal subunit protein bL33, found in Amoebophilus asiaticus (strain 5a2).